Here is a 235-residue protein sequence, read N- to C-terminus: LexA repressor (235 aa).

Positions 26–46 (FDEMKDALDLKSKSGIHRLIT) form a DNA-binding region, H-T-H motif. Active-site for autocatalytic cleavage activity residues include Ser-156 and Lys-194.

Belongs to the peptidase S24 family. In terms of assembly, homodimer.

It carries out the reaction Hydrolysis of Ala-|-Gly bond in repressor LexA.. Functionally, represses a number of genes involved in the response to DNA damage (SOS response), including recA and lexA. In the presence of single-stranded DNA, RecA interacts with LexA causing an autocatalytic cleavage which disrupts the DNA-binding part of LexA, leading to derepression of the SOS regulon and eventually DNA repair. The chain is LexA repressor from Paramagnetospirillum magneticum (strain ATCC 700264 / AMB-1) (Magnetospirillum magneticum).